The primary structure comprises 558 residues: Biotin biosynthesis bifunctional protein BioHC (558 aa).

Residues 1–287 (MSNIEPSNVK…FSQPAKIAQI (287 aa)) are carboxylesterase. Substrate-binding positions include Trp56, 115–116 (SL), and 182–186 (FGLLQ). Residue Ser115 is the Nucleophile of the active site. Active-site residues include Asp246 and His274. His274 serves as a coordination point for substrate. The malonyl-ACP O-methyltransferase stretch occupies residues 288–558 (MLARVHAKRN…EVGFYQLLKV (271 aa)).

In the N-terminal section; belongs to the AB hydrolase superfamily. Carboxylesterase BioH family. It in the C-terminal section; belongs to the methyltransferase superfamily.

The enzyme catalyses a carboxylic ester + H2O = an alcohol + a carboxylate + H(+). It carries out the reaction malonyl-[ACP] + S-adenosyl-L-methionine = malonyl-[ACP] methyl ester + S-adenosyl-L-homocysteine. The protein operates within cofactor biosynthesis; biotin biosynthesis. Its function is as follows. Converts the free carboxyl group of a malonyl-thioester to its methyl ester by transfer of a methyl group from S-adenosyl-L-methionine (SAM). It allows to synthesize pimeloyl-ACP via the fatty acid synthetic pathway. Functionally, the physiological role of BioH is to remove the methyl group introduced by BioC when the pimeloyl moiety is complete. It allows to synthesize pimeloyl-ACP via the fatty acid synthetic pathway through the hydrolysis of the ester bonds of pimeloyl-ACP esters. The protein is Biotin biosynthesis bifunctional protein BioHC (bioC) of Saccharophagus degradans (strain 2-40 / ATCC 43961 / DSM 17024).